Here is a 382-residue protein sequence, read N- to C-terminus: Elongation factor Tu (382 aa).

GTP is bound by residues 1–7 (HVDHGKT), 62–66 (DCPGH), and 117–120 (NKVD). A tr-type G domain is found at 1 to 190 (HVDHGKTTLT…AVDEYIPTPQ (190 aa)). T7 is a binding site for Mg(2+).

It belongs to the TRAFAC class translation factor GTPase superfamily. Classic translation factor GTPase family. EF-Tu/EF-1A subfamily. Monomer.

The protein localises to the cytoplasm. It catalyses the reaction GTP + H2O = GDP + phosphate + H(+). GTP hydrolase that promotes the GTP-dependent binding of aminoacyl-tRNA to the A-site of ribosomes during protein biosynthesis. This is Elongation factor Tu from Chloroflexus aurantiacus.